The following is a 123-amino-acid chain: Small ribosomal subunit protein uS12 (123 aa).

The segment at 1 to 26 (MPTLNQLVRKPRKRPVAKSKVPALDA) is disordered. Aspartate 89 is modified (3-methylthioaspartic acid). Residues 104 to 123 (TAGVKNRKQSRSKYGAKRPK) form a disordered region. Residues 108–123 (KNRKQSRSKYGAKRPK) show a composition bias toward basic residues.

This sequence belongs to the universal ribosomal protein uS12 family. Part of the 30S ribosomal subunit. Contacts proteins S8 and S17. May interact with IF1 in the 30S initiation complex.

Its function is as follows. With S4 and S5 plays an important role in translational accuracy. Interacts with and stabilizes bases of the 16S rRNA that are involved in tRNA selection in the A site and with the mRNA backbone. Located at the interface of the 30S and 50S subunits, it traverses the body of the 30S subunit contacting proteins on the other side and probably holding the rRNA structure together. The combined cluster of proteins S8, S12 and S17 appears to hold together the shoulder and platform of the 30S subunit. This is Small ribosomal subunit protein uS12 from Acidithiobacillus ferrooxidans (strain ATCC 23270 / DSM 14882 / CIP 104768 / NCIMB 8455) (Ferrobacillus ferrooxidans (strain ATCC 23270)).